We begin with the raw amino-acid sequence, 438 residues long: METIYALSTAAGRAGIAVLRLSGPHARAALRALTGRKAGAPREAMLCRFRDPETHAALDRGLAIFFPAPASFTGEDVVELHIHGGRAVIAAMLRALGQLPGLRAAQPGEFTRRAFENGKLDLTEVEGLADLIDAETEAQRAQALRQMEGALGQLYEAWRARLMRALAYAEAEIDFPDEEVPGDLIAKLGPDIEALETEIAAHLDDGRRGEQLRDGVEVAIVGPPNAGKSSLLNRLAGREAAIVSDEAGTTRDVLEVRLDIGGVPVTLADTAGLREAAGAIEQEGVRRALARAEAADLRIVMVAPGVSGIGNGFALARPDDLRVLNKVDLGAEVPDGVIGISALTGQGIDALEAALAARVGSAYEAREHPVITRARHREGLADCAASLARAEAALKAGRDAELVAEDLRLAARALGRITGRVDVEDLLDVIFRDFCIGK.

Residues Arg-20, Glu-79, and Lys-119 each contribute to the (6S)-5-formyl-5,6,7,8-tetrahydrofolate site. A TrmE-type G domain is found at 215–360 (GVEVAIVGPP…LEAALAARVG (146 aa)). GTP contacts are provided by residues 225 to 230 (NAGKSS), 244 to 250 (SDEAGTT), and 269 to 272 (DTAG). Positions 229 and 250 each coordinate Mg(2+). A (6S)-5-formyl-5,6,7,8-tetrahydrofolate-binding site is contributed by Lys-438.

The protein belongs to the TRAFAC class TrmE-Era-EngA-EngB-Septin-like GTPase superfamily. TrmE GTPase family. In terms of assembly, homodimer. Heterotetramer of two MnmE and two MnmG subunits. K(+) serves as cofactor.

It is found in the cytoplasm. Its function is as follows. Exhibits a very high intrinsic GTPase hydrolysis rate. Involved in the addition of a carboxymethylaminomethyl (cmnm) group at the wobble position (U34) of certain tRNAs, forming tRNA-cmnm(5)s(2)U34. The sequence is that of tRNA modification GTPase MnmE from Parvibaculum lavamentivorans (strain DS-1 / DSM 13023 / NCIMB 13966).